The primary structure comprises 562 residues: Potassium-transporting ATPase potassium-binding subunit (562 aa).

Transmembrane regions (helical) follow at residues Phe-6–Phe-26, Tyr-62–Met-82, Gly-132–Ile-152, Val-170–Val-190, Phe-253–Val-273, Leu-283–Leu-303, Phe-327–Val-347, Ala-356–Val-376, Gly-379–Gly-399, Met-416–Ile-436, Leu-483–Ile-503, and Leu-526–Ala-546.

This sequence belongs to the KdpA family. In terms of assembly, the system is composed of three essential subunits: KdpA, KdpB and KdpC.

The protein resides in the cell inner membrane. In terms of biological role, part of the high-affinity ATP-driven potassium transport (or Kdp) system, which catalyzes the hydrolysis of ATP coupled with the electrogenic transport of potassium into the cytoplasm. This subunit binds the periplasmic potassium ions and delivers the ions to the membrane domain of KdpB through an intramembrane tunnel. This is Potassium-transporting ATPase potassium-binding subunit from Serratia proteamaculans (strain 568).